A 47-amino-acid chain; its full sequence is Accessory gland peptide Acp33A (47 aa).

Residues 1–21 (MLPSKRVPFLFTIILFLAGLG) form the signal peptide.

Main cells of accessory gland and seminal fluid.

It is found in the secreted. In terms of biological role, responsible for physiological and behavioral changes in mated female flies. This is Accessory gland peptide Acp33A (Acp33A) from Drosophila melanogaster (Fruit fly).